Consider the following 345-residue polypeptide: Phosphoribosylformylglycinamidine cyclo-ligase (345 aa).

Belongs to the AIR synthase family.

Its subcellular location is the cytoplasm. It catalyses the reaction 2-formamido-N(1)-(5-O-phospho-beta-D-ribosyl)acetamidine + ATP = 5-amino-1-(5-phospho-beta-D-ribosyl)imidazole + ADP + phosphate + H(+). Its pathway is purine metabolism; IMP biosynthesis via de novo pathway; 5-amino-1-(5-phospho-D-ribosyl)imidazole from N(2)-formyl-N(1)-(5-phospho-D-ribosyl)glycinamide: step 2/2. This Escherichia coli O6:K15:H31 (strain 536 / UPEC) protein is Phosphoribosylformylglycinamidine cyclo-ligase.